A 311-amino-acid chain; its full sequence is Ketoisovalerate oxidoreductase subunit VorB (311 aa).

Heterotetramer of one alpha, one beta, one delta and one gamma chain.

It catalyses the reaction 3-methyl-2-oxobutanoate + 2 oxidized [2Fe-2S]-[ferredoxin] + CoA = 2-methylpropanoyl-CoA + 2 reduced [2Fe-2S]-[ferredoxin] + CO2 + H(+). The polypeptide is Ketoisovalerate oxidoreductase subunit VorB (vorB) (Pyrococcus furiosus (strain ATCC 43587 / DSM 3638 / JCM 8422 / Vc1)).